The primary structure comprises 398 residues: Succinate--CoA ligase [ADP-forming] subunit beta (398 aa).

The ATP-grasp domain occupies 9 to 250 (KQLFARYGVP…VDEEDPVELQ (242 aa)). Residues Lys-50, 57-59 (GRG), Glu-104, Leu-107, and Glu-112 contribute to the ATP site. Residues Asn-205 and Asp-219 each contribute to the Mg(2+) site. Residues Asn-270 and 327-329 (GIM) contribute to the substrate site.

The protein belongs to the succinate/malate CoA ligase beta subunit family. As to quaternary structure, heterotetramer of two alpha and two beta subunits. Requires Mg(2+) as cofactor.

The enzyme catalyses succinate + ATP + CoA = succinyl-CoA + ADP + phosphate. It catalyses the reaction GTP + succinate + CoA = succinyl-CoA + GDP + phosphate. It functions in the pathway carbohydrate metabolism; tricarboxylic acid cycle; succinate from succinyl-CoA (ligase route): step 1/1. Succinyl-CoA synthetase functions in the citric acid cycle (TCA), coupling the hydrolysis of succinyl-CoA to the synthesis of either ATP or GTP and thus represents the only step of substrate-level phosphorylation in the TCA. The beta subunit provides nucleotide specificity of the enzyme and binds the substrate succinate, while the binding sites for coenzyme A and phosphate are found in the alpha subunit. The sequence is that of Succinate--CoA ligase [ADP-forming] subunit beta from Sorangium cellulosum (strain So ce56) (Polyangium cellulosum (strain So ce56)).